The primary structure comprises 181 residues: UPF0398 protein LMHCC_0668 (181 aa).

It belongs to the UPF0398 family.

This Listeria monocytogenes serotype 4a (strain HCC23) protein is UPF0398 protein LMHCC_0668.